We begin with the raw amino-acid sequence, 169 residues long: MAQHKINYTQNGGLPVALTSIDKIVNWGRSNSLWAMTYGLACCGIEMMASGASRYDFDRFGTIFRASPRQSDVMIVAGTLTKKHAEFIKRLYDQMTEPKWVISMGSCANTGGMFNTYATVQGVDRIIPVDLYLPGCAPRPETLQYGVMLLQKKIRANKASRAQVAKRLM.

[4Fe-4S] cluster-binding residues include cysteine 42, cysteine 43, cysteine 107, and cysteine 136.

It belongs to the complex I 20 kDa subunit family. In terms of assembly, NDH-1 is composed of 14 different subunits. Subunits NuoB, C, D, E, F, and G constitute the peripheral sector of the complex. [4Fe-4S] cluster is required as a cofactor.

Its subcellular location is the cell inner membrane. It catalyses the reaction a quinone + NADH + 5 H(+)(in) = a quinol + NAD(+) + 4 H(+)(out). NDH-1 shuttles electrons from NADH, via FMN and iron-sulfur (Fe-S) centers, to quinones in the respiratory chain. The immediate electron acceptor for the enzyme in this species is believed to be ubiquinone. Couples the redox reaction to proton translocation (for every two electrons transferred, four hydrogen ions are translocated across the cytoplasmic membrane), and thus conserves the redox energy in a proton gradient. The protein is NADH-quinone oxidoreductase subunit B of Sulfurimonas denitrificans (strain ATCC 33889 / DSM 1251) (Thiomicrospira denitrificans (strain ATCC 33889 / DSM 1251)).